A 636-amino-acid polypeptide reads, in one-letter code: Ketocytochalasin monooxygenase (636 aa).

FAD-binding positions include D125, 133–136 (TWYW), D145, Y151, and I195. Residue 143-145 (ACD) participates in NADP(+) binding. Residues 279–285 (TGASAVQ), 302–303 (RT), and 420–421 (KR) each bind NADP(+). W534 lines the FAD pocket.

Belongs to the FAD-binding monooxygenase family. Requires FAD as cofactor.

It catalyses the reaction ketocytochalasin + NADPH + O2 + H(+) = iso-precytochalasin + NADP(+) + H2O. The enzyme catalyses iso-precytochalasin + NADPH + O2 + H(+) = cytochalasin Z16 + NADP(+) + H2O. Its pathway is mycotoxin biosynthesis. In terms of biological role, ketocytochalasin monooxygenase; part of the gene cluster that mediates the biosynthesis of a family of the mycotoxins cytochalasins E and K. The hybrid PKS-NRPS synthetase ccsA and the enoyl reductase ccsC are responsible for fusion of phenylalanine with an octaketide backbone and subsequent release of the stable tetramic acid precursor. The polyketide synthase module (PKS) of the PKS-NRPS ccsA is responsible for the synthesis of the octaketide backbone. The downstream nonribosomal peptide synthetase (NRPS) amidates the carboxyl end of the octaketide with a phenylalanine. A reductase-like domain (R) at the C-terminus catalyzes the reductive release of the polyketide-amino acid intermediate. Because ccsA lacks a designated enoylreductase (ER) domain, the required activity is provided the enoyl reductase ccsC. Upon formation of the 11-membered carbocycle-fused perhydroisoindolone intermediate, a number of oxidative steps are required to afford the final cytochalasin E and K, including two hydroxylations at C17 and C18, one alcohol oxidation at C17, one epoxidation at C6 and C7 and two Baeyer-Villiger oxidations. The oxidative modification at C17, C18 and the C6-C7 epoxidation are likely to be catalyzed by the two cytochrome P450 oxygenases ccsD and ccsG. CcsD may be responsible for the epoxidation of the C6-C7 double bond. CcsG may be responsible for the successive oxidative modifications at C17 and C18. The double Baeyer-Villiger oxidations of ketocytochalasin to precytochalasin and cytochalasin Z(16) are among the final steps leading to cytochalasin E and K and are catalyzed by ccsB. The first oxygen insertion step follows that of the classic BVMO mechanism, generating the ester precytochalasin. Release of precytochalasin into an aqueous environment can generate the shunt product iso-precytochalasin through spontaneous isomerization. Alternatively, precytochalasin can undergo further oxidation by ccsB to yield the in-line carbonate-containing cytochalasin Z(16). Cytochalasin Z(16) is a precursor to cytochalasin E and cytochalasin K, whereas iso-precytochalasin is a precursor to cytochalasin Z(17) and rosellichalasin. The hydrolyase ccsE may catalyze hydrolysis of epoxide bond in cytochalasin E to afford cytochalasin K. The function of ccsF has not been assigned but it may play a role in post-PKS-NRPS biosynthetic step, resistance or transport of cytochalasins and related PKS-NRPS products. The polypeptide is Ketocytochalasin monooxygenase (Aspergillus clavatus (strain ATCC 1007 / CBS 513.65 / DSM 816 / NCTC 3887 / NRRL 1 / QM 1276 / 107)).